The sequence spans 198 residues: HTH-type transcriptional regulator BetI (198 aa).

Positions 8–68 (PLRRRELIDA…ATMRHLLREL (61 aa)) constitute an HTH tetR-type domain. The H-T-H motif DNA-binding region spans 31–50 (TVAQIAHEAGVSPALAHHYF).

Its pathway is amine and polyamine biosynthesis; betaine biosynthesis via choline pathway [regulation]. In terms of biological role, repressor involved in the biosynthesis of the osmoprotectant glycine betaine. It represses transcription of the choline transporter BetT and the genes of BetAB involved in the synthesis of glycine betaine. In Brucella melitensis biotype 2 (strain ATCC 23457), this protein is HTH-type transcriptional regulator BetI.